The chain runs to 116 residues: CDKN2AIP N-terminal-like protein (116 aa).

M1 is modified (N-acetylmethionine). In terms of domain architecture, XRN2-binding (XTBD) spans 24-116 (AEQFRSYSES…RSELMKKHQS (93 aa)).

This sequence belongs to the CARF family. As to quaternary structure, interacts with XRN2; the interaction is direct.

This is CDKN2AIP N-terminal-like protein (CDKN2AIPNL) from Homo sapiens (Human).